Consider the following 342-residue polypeptide: Arrestin domain-containing protein 5 (342 aa).

It belongs to the arrestin family. In terms of tissue distribution, testis-enriched.

The protein localises to the membrane. In terms of biological role, plays an essential role in spermatogenesis. May be involved in the anchoring of the sperm head to the tail during spermatogenesis by affecting SEC22A-mediated SUN5 and NDC1 transport and localization. This is Arrestin domain-containing protein 5 (ARRDC5) from Homo sapiens (Human).